Reading from the N-terminus, the 103-residue chain is Large ribosomal subunit protein bL21 (103 aa).

It belongs to the bacterial ribosomal protein bL21 family. In terms of assembly, part of the 50S ribosomal subunit. Contacts protein L20.

In terms of biological role, this protein binds to 23S rRNA in the presence of protein L20. This chain is Large ribosomal subunit protein bL21, found in Mycobacterium marinum (strain ATCC BAA-535 / M).